The chain runs to 339 residues: Tetraacyldisaccharide 4'-kinase (339 aa).

53 to 60 (TCGGAGKT) contacts ATP.

Belongs to the LpxK family.

It carries out the reaction a lipid A disaccharide + ATP = a lipid IVA + ADP + H(+). It functions in the pathway glycolipid biosynthesis; lipid IV(A) biosynthesis; lipid IV(A) from (3R)-3-hydroxytetradecanoyl-[acyl-carrier-protein] and UDP-N-acetyl-alpha-D-glucosamine: step 6/6. In terms of biological role, transfers the gamma-phosphate of ATP to the 4'-position of a tetraacyldisaccharide 1-phosphate intermediate (termed DS-1-P) to form tetraacyldisaccharide 1,4'-bis-phosphate (lipid IVA). This Bartonella henselae (strain ATCC 49882 / DSM 28221 / CCUG 30454 / Houston 1) (Rochalimaea henselae) protein is Tetraacyldisaccharide 4'-kinase.